Here is a 529-residue protein sequence, read N- to C-terminus: Hyaluronidase PH-20 (529 aa).

The N-terminal stretch at 1-35 is a signal peptide; sequence MGAFTFKHSFFGSFVECSGVLQTVFIFLLIPCCLA. 2 disulfide bridges follow: C59/C351 and C223/C237. N-linked (GlcNAc...) asparagine glycosylation is present at N81. E147 acts as the Proton donor in catalysis. N165 and N179 each carry an N-linked (GlcNAc...) asparagine glycan. N-linked (GlcNAc...) asparagine glycosylation is found at N253 and N368. 3 disulfides stabilise this stretch: C376/C387, C381/C435, and C437/C464. The N-linked (GlcNAc...) asparagine glycan is linked to N401. The segment at 478 to 502 is disordered; the sequence is DEPPITDDTSQNQDSISDITSSAPP. Positions 487 to 502 are enriched in polar residues; it reads SQNQDSISDITSSAPP. S492 carries GPI-anchor amidated serine lipidation. Residues 493–529 constitute a propeptide, removed in mature form; the sequence is ISDITSSAPPSSHILPKDLSWCLFLLSIFSQHWKYLL.

This sequence belongs to the glycosyl hydrolase 56 family. Endoproteolysis (toward the C-terminus producing two disulfide-linked fragments) could activate PH-20. Testis.

The protein localises to the cell membrane. It carries out the reaction Random hydrolysis of (1-&gt;4)-linkages between N-acetyl-beta-D-glucosamine and D-glucuronate residues in hyaluronate.. Involved in sperm-egg adhesion. Upon fertilization sperm must first penetrate a layer of cumulus cells that surrounds the egg before reaching the zona pellucida. The cumulus cells are embedded in a matrix containing hyaluronic acid which is formed prior to ovulation. This protein aids in penetrating the layer of cumulus cells by digesting hyaluronic acid. This is Hyaluronidase PH-20 (SPAM1) from Cavia porcellus (Guinea pig).